We begin with the raw amino-acid sequence, 234 residues long: Inner membrane protein YbhL (234 aa).

Residues 1-23 (MDRFPRSDSIVQPRAGLQTYMAQ) are Periplasmic-facing. A helical transmembrane segment spans residues 24-44 (VYGWMTVGLLLTAFVAWYAAN). At 45-56 (SAAVMELLFTNR) the chain is on the cytoplasmic side. Residues 57-77 (VFLIGLIIAQLALVIVLSAMI) form a helical membrane-spanning segment. The Periplasmic segment spans residues 78–79 (QK). Residues 80–100 (LSAGVTTMLFMLYSALTGLTL) form a helical membrane-spanning segment. Residues 101–102 (SS) are Cytoplasmic-facing. The helical transmembrane segment at 103-123 (IFIVYTAASIASTFVVTAGMF) threads the bilayer. Residues 124–136 (GAMSLYGYTTKRD) lie on the Periplasmic side of the membrane. The helical transmembrane segment at 137–157 (LSGFGNMLFMALIGIVLASLV) threads the bilayer. Residues 158-163 (NFWLKS) are Cytoplasmic-facing. Residues 164 to 184 (EALMWAVTYIGVIVFVGLTAY) traverse the membrane as a helical segment. The Periplasmic segment spans residues 185 to 206 (DTQKLKNMGEQIDTRDTSNLRK). The helical transmembrane segment at 207–227 (YSILGALTLYLDFINLFLMLL) threads the bilayer. The Cytoplasmic segment spans residues 228 to 234 (RIFGNRR).

This sequence belongs to the BI1 family.

It is found in the cell inner membrane. The sequence is that of Inner membrane protein YbhL (ybhL) from Escherichia coli (strain K12).